The sequence spans 338 residues: Lipoate-protein ligase A (338 aa).

One can recognise a BPL/LPL catalytic domain in the interval 29–216 (SPDQRVLFLW…AFFNYYDEKV (188 aa)). ATP contacts are provided by residues Arg-71, 76–79 (GAVF), and Lys-134. Lys-134 serves as a coordination point for (R)-lipoate.

It belongs to the LplA family. As to quaternary structure, monomer.

It localises to the cytoplasm. It carries out the reaction L-lysyl-[lipoyl-carrier protein] + (R)-lipoate + ATP = N(6)-[(R)-lipoyl]-L-lysyl-[lipoyl-carrier protein] + AMP + diphosphate + H(+). The protein operates within protein modification; protein lipoylation via exogenous pathway; protein N(6)-(lipoyl)lysine from lipoate: step 1/2. It functions in the pathway protein modification; protein lipoylation via exogenous pathway; protein N(6)-(lipoyl)lysine from lipoate: step 2/2. Its function is as follows. Catalyzes both the ATP-dependent activation of exogenously supplied lipoate to lipoyl-AMP and the transfer of the activated lipoyl onto the lipoyl domains of lipoate-dependent enzymes. The protein is Lipoate-protein ligase A of Yersinia enterocolitica serotype O:8 / biotype 1B (strain NCTC 13174 / 8081).